Here is a 276-residue protein sequence, read N- to C-terminus: Large ribosomal subunit protein uL2 (276 aa).

The disordered stretch occupies residues 224 to 254 (VMNPVDHPHGGGEGRTSGGRHPVTPWGVPTK).

Belongs to the universal ribosomal protein uL2 family. Part of the 50S ribosomal subunit. Forms a bridge to the 30S subunit in the 70S ribosome.

One of the primary rRNA binding proteins. Required for association of the 30S and 50S subunits to form the 70S ribosome, for tRNA binding and peptide bond formation. It has been suggested to have peptidyltransferase activity; this is somewhat controversial. Makes several contacts with the 16S rRNA in the 70S ribosome. The chain is Large ribosomal subunit protein uL2 from Gluconobacter oxydans (strain 621H) (Gluconobacter suboxydans).